The following is a 119-amino-acid chain: Large ribosomal subunit protein bL20 (119 aa).

The protein belongs to the bacterial ribosomal protein bL20 family.

Its function is as follows. Binds directly to 23S ribosomal RNA and is necessary for the in vitro assembly process of the 50S ribosomal subunit. It is not involved in the protein synthesizing functions of that subunit. The sequence is that of Large ribosomal subunit protein bL20 from Anoxybacillus flavithermus (strain DSM 21510 / WK1).